The primary structure comprises 388 residues: Carbamoyl phosphate synthase small chain (388 aa).

A CPSase region spans residues 1–194; sequence MAQNPLSKPT…WPEGYARQEA (194 aa). Ser-53, Gly-246, and Gly-248 together coordinate L-glutamine. In terms of domain architecture, Glutamine amidotransferase type-1 spans 198–387; sequence KVVAIDYGAK…AAAMDAQKAE (190 aa). Catalysis depends on Cys-276, which acts as the Nucleophile. Residues Leu-277, Gln-280, Asn-318, Gly-320, and Phe-321 each coordinate L-glutamine. Residues His-360 and Glu-362 contribute to the active site.

The protein belongs to the CarA family. In terms of assembly, composed of two chains; the small (or glutamine) chain promotes the hydrolysis of glutamine to ammonia, which is used by the large (or ammonia) chain to synthesize carbamoyl phosphate. Tetramer of heterodimers (alpha,beta)4.

It catalyses the reaction hydrogencarbonate + L-glutamine + 2 ATP + H2O = carbamoyl phosphate + L-glutamate + 2 ADP + phosphate + 2 H(+). It carries out the reaction L-glutamine + H2O = L-glutamate + NH4(+). The protein operates within amino-acid biosynthesis; L-arginine biosynthesis; carbamoyl phosphate from bicarbonate: step 1/1. Its pathway is pyrimidine metabolism; UMP biosynthesis via de novo pathway; (S)-dihydroorotate from bicarbonate: step 1/3. Functionally, small subunit of the glutamine-dependent carbamoyl phosphate synthetase (CPSase). CPSase catalyzes the formation of carbamoyl phosphate from the ammonia moiety of glutamine, carbonate, and phosphate donated by ATP, constituting the first step of 2 biosynthetic pathways, one leading to arginine and/or urea and the other to pyrimidine nucleotides. The small subunit (glutamine amidotransferase) binds and cleaves glutamine to supply the large subunit with the substrate ammonia. The polypeptide is Carbamoyl phosphate synthase small chain (Ruegeria pomeroyi (strain ATCC 700808 / DSM 15171 / DSS-3) (Silicibacter pomeroyi)).